The sequence spans 199 residues: Probable nicotinate-nucleotide adenylyltransferase (199 aa).

It belongs to the NadD family.

It catalyses the reaction nicotinate beta-D-ribonucleotide + ATP + H(+) = deamido-NAD(+) + diphosphate. It functions in the pathway cofactor biosynthesis; NAD(+) biosynthesis; deamido-NAD(+) from nicotinate D-ribonucleotide: step 1/1. Its function is as follows. Catalyzes the reversible adenylation of nicotinate mononucleotide (NaMN) to nicotinic acid adenine dinucleotide (NaAD). This Roseiflexus sp. (strain RS-1) protein is Probable nicotinate-nucleotide adenylyltransferase.